Reading from the N-terminus, the 34-residue chain is Conotoxin S4.3 (34 aa).

The residue at position 1 (Gln1) is a Pyrrolidone carboxylic acid. Glu3 is modified (4-carboxyglutamate). Ser7 carries O-linked (HexNAc...) serine glycosylation. O-linked (HexNAc...) threonine glycosylation occurs at Thr9. Pro17, Pro22, Pro31, and Pro32 each carry 4-hydroxyproline.

The protein belongs to the conotoxin A superfamily. Post-translationally, contains 3 disulfide bonds. As to expression, expressed by the venom duct.

Its subcellular location is the secreted. Probable neurotoxin with ion channel inhibitor activity. This Conus striatus (Striated cone) protein is Conotoxin S4.3.